Reading from the N-terminus, the 352-residue chain is Protein-glutamate methylesterase/protein-glutamine glutaminase 2 (352 aa).

The 119-residue stretch at 6-124 folds into the Response regulatory domain; that stretch reads KVLIVEDSLV…NAGYDTMAAK (119 aa). A 4-aspartylphosphate modification is found at aspartate 57. Positions 162 to 343 constitute a CheB-type methylesterase domain; sequence PGTYSMVGIV…LPLPAIAARL (182 aa). Active-site residues include serine 173, histidine 200, and aspartate 292.

The protein belongs to the CheB family. Phosphorylated by CheA. Phosphorylation of the N-terminal regulatory domain activates the methylesterase activity.

The protein localises to the cytoplasm. It carries out the reaction [protein]-L-glutamate 5-O-methyl ester + H2O = L-glutamyl-[protein] + methanol + H(+). The catalysed reaction is L-glutaminyl-[protein] + H2O = L-glutamyl-[protein] + NH4(+). Functionally, involved in chemotaxis. Part of a chemotaxis signal transduction system that modulates chemotaxis in response to various stimuli. Catalyzes the demethylation of specific methylglutamate residues introduced into the chemoreceptors (methyl-accepting chemotaxis proteins or MCP) by CheR. Also mediates the irreversible deamidation of specific glutamine residues to glutamic acid. The chain is Protein-glutamate methylesterase/protein-glutamine glutaminase 2 from Paramagnetospirillum magneticum (strain ATCC 700264 / AMB-1) (Magnetospirillum magneticum).